The primary structure comprises 116 residues: Iron-sulfur cluster insertion protein ErpA (116 aa).

Cysteine 44, cysteine 108, and cysteine 110 together coordinate iron-sulfur cluster.

The protein belongs to the HesB/IscA family. As to quaternary structure, homodimer. Iron-sulfur cluster is required as a cofactor.

Its function is as follows. Required for insertion of 4Fe-4S clusters for at least IspG. This is Iron-sulfur cluster insertion protein ErpA from Aeromonas salmonicida (strain A449).